The following is a 448-amino-acid chain: C4-dicarboxylate transport protein (448 aa).

The next 7 membrane-spanning stretches (helical) occupy residues 22–42 (FQVV…PAFA), 55–75 (LVKM…IAGM), 90–110 (TYFL…AHVV), 137–157 (ELSL…SAFV), 159–179 (GNIL…ALVG), 199–219 (LVHM…AFTI), and 232–252 (WLVG…LGIV). The interval 428-448 (RAPPLQAPVPPPDAVAPVSAR) is disordered. The segment covering 432–441 (LQAPVPPPDA) has biased composition (pro residues).

Belongs to the dicarboxylate/amino acid:cation symporter (DAACS) (TC 2.A.23) family.

The protein resides in the cell inner membrane. Functionally, responsible for the transport of dicarboxylates such as succinate, fumarate, and malate from the periplasm across the membrane. The polypeptide is C4-dicarboxylate transport protein (Xanthomonas campestris pv. campestris (strain 8004)).